We begin with the raw amino-acid sequence, 227 residues long: 2-phospho-L-lactate guanylyltransferase (227 aa).

It belongs to the CofC family. As to quaternary structure, homodimer.

It catalyses the reaction (2S)-2-phospholactate + GTP + H(+) = (2S)-lactyl-2-diphospho-5'-guanosine + diphosphate. It functions in the pathway cofactor biosynthesis; coenzyme F420 biosynthesis. In terms of biological role, guanylyltransferase that catalyzes the activation of (2S)-2-phospholactate (2-PL) as (2S)-lactyl-2-diphospho-5'-guanosine, via the condensation of 2-PL with GTP. It is involved in the biosynthesis of coenzyme F420, a hydride carrier cofactor. This Methanocaldococcus sp. (strain FS406-22) protein is 2-phospho-L-lactate guanylyltransferase.